A 132-amino-acid chain; its full sequence is Small ribosomal subunit protein uS8 (132 aa).

It belongs to the universal ribosomal protein uS8 family. As to quaternary structure, part of the 30S ribosomal subunit. Contacts proteins S5 and S12.

One of the primary rRNA binding proteins, it binds directly to 16S rRNA central domain where it helps coordinate assembly of the platform of the 30S subunit. The polypeptide is Small ribosomal subunit protein uS8 (Bartonella bacilliformis (strain ATCC 35685 / KC583 / Herrer 020/F12,63)).